Here is a 579-residue protein sequence, read N- to C-terminus: Glucans biosynthesis protein G (579 aa).

The N-terminal stretch at 1–37 (MIVSPHKASRIPGNRLRKALMASAALVGLMSAGQLWA) is a signal peptide. Positions 516–579 (AKPAEEAKHD…TWSYQLPADE (64 aa)) are disordered. Positions 517 to 539 (KPAEEAKHDKTAAKHGKAEKAAK) are enriched in basic and acidic residues.

It belongs to the OpgD/OpgG family.

Its subcellular location is the periplasm. It participates in glycan metabolism; osmoregulated periplasmic glucan (OPG) biosynthesis. In terms of biological role, involved in the biosynthesis of osmoregulated periplasmic glucans (OPGs). The chain is Glucans biosynthesis protein G from Pseudomonas putida (strain W619).